Consider the following 365-residue polypeptide: 3-isopropylmalate dehydrogenase (365 aa).

Substrate-binding residues include Arg96, Arg106, Arg134, and Asp224. Residues Asp224, Asp248, and Asp252 each coordinate Mg(2+). Position 288-300 (288-300 (GSAPTIAKQNIAN)) interacts with NAD(+).

Belongs to the isocitrate and isopropylmalate dehydrogenases family. LeuB type 1 subfamily. As to quaternary structure, homodimer. Mg(2+) is required as a cofactor. The cofactor is Mn(2+).

It is found in the cytoplasm. It carries out the reaction (2R,3S)-3-isopropylmalate + NAD(+) = 4-methyl-2-oxopentanoate + CO2 + NADH. It functions in the pathway amino-acid biosynthesis; L-leucine biosynthesis; L-leucine from 3-methyl-2-oxobutanoate: step 3/4. Catalyzes the oxidation of 3-carboxy-2-hydroxy-4-methylpentanoate (3-isopropylmalate) to 3-carboxy-4-methyl-2-oxopentanoate. The product decarboxylates to 4-methyl-2 oxopentanoate. The sequence is that of 3-isopropylmalate dehydrogenase from Dehalococcoides mccartyi (strain ATCC BAA-2266 / KCTC 15142 / 195) (Dehalococcoides ethenogenes (strain 195)).